The primary structure comprises 116 residues: Vesicle-associated membrane protein 2 (116 aa).

The tract at residues 1-28 (MSATAATVPPAAPAGEGGPPAPPPNLTS) is disordered. Ser2 bears the N-acetylserine mark. The Cytoplasmic portion of the chain corresponds to 2-94 (SATAATVPPA…KRKYWWKNLK (93 aa)). Residues 31-91 (RLQQTQAQVD…AKLKRKYWWK (61 aa)) form the v-SNARE coiled-coil homology domain. A required for interaction with SEPT8 region spans residues 92–116 (NLKMMIILGVICAIILIIIIVYFST). The chain crosses the membrane as a helical; Anchor for type IV membrane protein span at residues 95-114 (MMIILGVICAIILIIIIVYF). Topologically, residues 115-116 (ST) are vesicular.

The protein belongs to the synaptobrevin family. Part of the SNARE core complex containing SNAP25, VAMP2 and STX1A; this complex constitutes the basic catalytic machinery of the complex neurotransmitter release apparatus. Recruited to the SNARE complex following binding of the SNARE complex component STX1A to STXBP1. This complex binds to CPLX1. Interacts with VAPA and VAPB. Interacts (via N-terminus) with KCNB1 (via N-terminus and C-terminus); stimulates the channel inactivation rate of KCNB1. Interacts with POPDC1 and STX4. Interacts with WDFY2, PRKCZ and PRKCI. Forms a complex with WDFY2 and PRKCZ. Interacts with SEPT8; the interaction inhibits interaction of VAMP2 with SYP. Interacts with SYP; the interaction is inhibited by interaction with SEPT8. Interacts with PICALM. Interacts with alpha-synuclein/SNCA. Interacts with STX3 isoform 3B. Phosphorylated by PRKCZ in vitro and this phosphorylation is increased in the presence of WDFY2. Post-translationally, (Microbial infection) Targeted and hydrolyzed by C.botulinum neurotoxin type B (BoNT/B, botB); 20 hours after treatment of spinal cord cells almost all the protein has been digested. BoNT/B hydrolyzes the 76-Gln-|-Phe-77 bond and inhibits neurotransmitter release. In terms of processing, (Microbial infection) Targeted and hydrolyzed by C.tetani toxin (tetX); 20 hours after treatment of spinal cord cells almost all the protein has been digested. Tetanus toxin hydrolyzes the 76-Gln-|-Phe-77 bond and inhibits neurotransmitter release. In terms of tissue distribution, expressed in the outer plexiform layer of the retina (at protein level).

The protein resides in the cytoplasmic vesicle. Its subcellular location is the secretory vesicle. The protein localises to the synaptic vesicle membrane. It is found in the cell membrane. In terms of biological role, involved in the targeting and/or fusion of transport vesicles to their target membrane. Major SNARE protein of synaptic vesicles which mediates fusion of synaptic vesicles to release neurotransmitters. Essential for fast vesicular exocytosis and activity-dependent neurotransmitter release as well as fast endocytosis that mediates rapid reuse of synaptic vesicles. Modulates the gating characteristics of the delayed rectifier voltage-dependent potassium channel KCNB1. This is Vesicle-associated membrane protein 2 (Vamp2) from Mus musculus (Mouse).